Reading from the N-terminus, the 546-residue chain is Chaperonin GroEL 2 (546 aa).

ATP-binding positions include 30-33, lysine 51, 87-91, glycine 415, 479-481, and aspartate 495; these read TLGP, DGTTT, and NAA.

This sequence belongs to the chaperonin (HSP60) family. As to quaternary structure, forms a cylinder of 14 subunits composed of two heptameric rings stacked back-to-back. Interacts with the co-chaperonin GroES.

The protein resides in the cytoplasm. It carries out the reaction ATP + H2O + a folded polypeptide = ADP + phosphate + an unfolded polypeptide.. Together with its co-chaperonin GroES, plays an essential role in assisting protein folding. The GroEL-GroES system forms a nano-cage that allows encapsulation of the non-native substrate proteins and provides a physical environment optimized to promote and accelerate protein folding. The sequence is that of Chaperonin GroEL 2 from Chromobacterium violaceum (strain ATCC 12472 / DSM 30191 / JCM 1249 / CCUG 213 / NBRC 12614 / NCIMB 9131 / NCTC 9757 / MK).